The sequence spans 443 residues: Chromosome partition protein MukF (443 aa).

The leucine-zipper stretch occupies residues 209 to 237; it reads LDETSGNLRELQDTLNAAGDKLQAQLLRI.

This sequence belongs to the MukF family. Interacts, and probably forms a ternary complex, with MukE and MukB via its C-terminal region. The complex formation is stimulated by calcium or magnesium. It is required for an interaction between MukE and MukB.

The protein localises to the cytoplasm. It localises to the nucleoid. Involved in chromosome condensation, segregation and cell cycle progression. May participate in facilitating chromosome segregation by condensation DNA from both sides of a centrally located replisome during cell division. Not required for mini-F plasmid partitioning. Probably acts via its interaction with MukB and MukE. Overexpression results in anucleate cells. It has a calcium binding activity. This Actinobacillus pleuropneumoniae serotype 3 (strain JL03) protein is Chromosome partition protein MukF.